The chain runs to 3416 residues: Genome polyprotein (3416 aa).

The interval 1-34 (MAKGAVLKGKGGGPPRRVPKETAKKTRQGPGRLP) is disordered. Topologically, residues 1–99 (MAKGAVLKGK…NKRRGKRRST (99 aa)) are cytoplasmic. The propeptide at 97-117 (RSTTGLLTPILLACLATLVFS) is ER anchor for the capsid protein C, removed in mature form by serine protease NS3. The helical transmembrane segment at 100 to 120 (TGLLTPILLACLATLVFSATV) threads the bilayer. Topologically, residues 121–243 (RRERTGNMVI…HLTRVEGWVW (123 aa)) are extracellular. Asn-145 carries an N-linked (GlcNAc...) asparagine; by host glycan. A helical transmembrane segment spans residues 244–261 (KNKFLTAAFCAVVWMVTD). Ser-262 is a topological domain (cytoplasmic). A helical transmembrane segment spans residues 263-281 (LPTRFIVITVALCLAPTYA). Residues 282 to 728 (TRCTHLQNRD…HTAFGAAFNT (447 aa)) lie on the Extracellular side of the membrane. 6 disulfide bridges follow: Cys-284–Cys-311, Cys-341–Cys-397, Cys-341–Cys-402, Cys-355–Cys-386, Cys-373–Cys-397, and Cys-373–Cys-402. A fusion peptide region spans residues 379 to 392 (DRGWGNHCGLFGKG). Residue Asn-435 is glycosylated (N-linked (GlcNAc...) asparagine; by host). 2 disulfide bridges follow: Cys-467/Cys-571 and Cys-588/Cys-619. The chain crosses the membrane as a helical span at residues 729 to 749 (IFGGVGFLPRILLGVALAWLG). At 750–756 (LNSRNPT) the chain is on the cytoplasmic side. Residues 757–777 (LSVGFLITGGLVLTMTLGVGA) form a helical membrane-spanning segment. Over 778 to 1134 (DMGCAIDANR…RSMVLADNGA (357 aa)) the chain is Extracellular. 6 cysteine pairs are disulfide-bonded: Cys-781/Cys-792, Cys-832/Cys-922, Cys-957/Cys-1002, Cys-1059/Cys-1108, Cys-1070/Cys-1092, and Cys-1091/Cys-1095. Asn-862, Asn-985, and Asn-1001 each carry an N-linked (GlcNAc...) asparagine; by host glycan. The helical transmembrane segment at 1135–1155 (MLSEGGVPGIVAVFVVLELVI) threads the bilayer. At 1156–1164 (RRRPTTGSS) the chain is on the lumenal side. Residues 1165–1185 (VVWCGMVVLGLVVTGLVTIEG) traverse the membrane as a helical segment. The Cytoplasmic portion of the chain corresponds to 1186–1189 (LCRY). A helical transmembrane segment spans residues 1190–1210 (VVAVGILMSMELGPEIVALVL). Over 1211-1235 (LQAVFDMRTGLLVAFAVKRAYTTRE) the chain is Lumenal. The helical transmembrane segment at 1236–1256 (AVATYFLLLVLELGFPEASLS) threads the bilayer. At 1257-1295 (NIWKWADSLAMGALILQACGQEGRTRVGYLLAAMMTQKD) the chain is on the cytoplasmic side. Residues 1296-1316 (MVIIHTGLTIFLSAATAMAVW) traverse the membrane as a helical segment. Over 1317–1361 (SMIKGQRDQKGLSWATPLAGLLGGEGVGLRLLAFRKLAERRNRRS) the chain is Lumenal. A helical membrane pass occupies residues 1362-1379 (FSEPLTVVGVMLTVASGM). The Cytoplasmic segment spans residues 1380-1384 (VRHTS). A helical membrane pass occupies residues 1385–1405 (QEALCALVAGAFLLLMMVLGT). The Lumenal segment spans residues 1406 to 1456 (RKMQLTAEWCGEVEWNPDLVNEGGEVNLKVRQDAMGNLHLTEVEKEERAMA). The tract at residues 1412 to 1451 (AEWCGEVEWNPDLVNEGGEVNLKVRQDAMGNLHLTEVEKE) is interacts with and activates NS3 protease. Residues 1457–1477 (LWLLAGLVASAFHWAGILIVL) constitute an intramembrane region (helical). At 1478–2162 (AVWTLFEMLG…RMAERDAPEA (685 aa)) the chain is on the lumenal side. The 180-residue stretch at 1492–1671 (SELVFSGQET…EAEKSRPEIP (180 aa)) folds into the Peptidase S7 domain. Catalysis depends on charge relay system; for serine protease NS3 activity residues His-1545, Asp-1569, and Ser-1629. Residues 1677–1833 (TGWMSKGQIT…ESNGAIMSEE (157 aa)) form the Helicase ATP-binding domain. Position 1690–1697 (1690–1697 (MHPGSGKT)) interacts with ATP. Positions 1781–1784 (DEAH) match the DEAH box motif. One can recognise a Helicase C-terminal domain in the interval 1844–2002 (GFDWITEYEG…TLRGPVATFY (159 aa)). At Lys-1885 the chain carries N6-acetyllysine; by host. Residues 2163 to 2183 (FLTIVEVAVLGVATLGILWCF) form a helical membrane-spanning segment. Topologically, residues 2184–2191 (VARASVSR) are cytoplasmic. Residues 2192 to 2211 (MFLGTVVLFAALFLLWIGGV) constitute an intramembrane region (helical). Position 2212 (Asp-2212) is a topological domain, lumenal. A helical membrane pass occupies residues 2213-2233 (YGHMAGIALIFYTLLTVLQPE). At 2234 to 2246 (PGKQRSSDDNRLA) the chain is on the cytoplasmic side. A helical membrane pass occupies residues 2247-2267 (YFLLGLFSLAGLVTANEMGML). Topologically, residues 2268–2301 (DKTKADLAGLVWRGEQRHPAWEEWTNVDIQPARS) are lumenal. The helical intramembrane region spans 2302-2322 (WGTYVLIVSLFTPYMLHQLQT). The Lumenal portion of the chain corresponds to 2323 to 2345 (KIQQLVNSSVASGAQAMRDLGGG). The helical intramembrane region spans 2346 to 2366 (TPFFGVAGHVIALGVTSLVGA). The Lumenal segment spans residues 2367–2368 (TP). A helical membrane pass occupies residues 2369–2389 (MSLGLGVALAAFHLAIVASGL). At 2390–2432 (EAELTQRAHRVFFSAMVKNPMVDGDVINPFPDGETKPALYERR) the chain is on the cytoplasmic side. Residues 2433-2453 (MSLILAIALCMGSVVLNRTAA) traverse the membrane as a helical segment. Over 2454–2476 (SMTEAGAVGLAALGQLVHPETET) the chain is Lumenal. Residues 2477–2497 (LWTMPMACGMAGLVRGSFWGL) form a helical membrane-spanning segment. Residues 2498–3416 (LPMGHRLWLR…WDLKLESNII (919 aa)) lie on the Cytoplasmic side of the membrane. Residues 2514–2778 (GGAEGETLGD…EVDLGTGTRC (265 aa)) enclose the mRNA cap 0-1 NS5-type MT domain. Residue Ser-2569 coordinates S-adenosyl-L-methionine. Ser-2569 is subject to Phosphoserine. Residue Lys-2574 is the For 2'-O-MTase activity of the active site. S-adenosyl-L-methionine contacts are provided by Gly-2599, Trp-2600, Thr-2617, Ile-2618, Asp-2644, and Val-2645. Asp-2659 functions as the For 2'-O-MTase activity in the catalytic mechanism. Ile-2660 contacts S-adenosyl-L-methionine. Catalysis depends on for 2'-O-MTase activity residues Lys-2696 and Glu-2732. Residues 2732 to 2736 (EMYFS) are interaction with host SCRIB. Tyr-2734 provides a ligand contact to S-adenosyl-L-methionine. Zn(2+) is bound by residues Glu-2952, His-2956, Cys-2961, and Cys-2964. The region spanning 3042 to 3191 (GLFYADDTAG…RPIDDRFGKA (150 aa)) is the RdRp catalytic domain. His-3226, Cys-3242, and Cys-3361 together coordinate Zn(2+).

This sequence in the N-terminal section; belongs to the class I-like SAM-binding methyltransferase superfamily. mRNA cap 0-1 NS5-type methyltransferase family. In terms of assembly, homodimer. Interacts (via N-terminus) with host EXOC1 (via C-terminus); this interaction results in EXOC1 degradation through the proteasome degradation pathway. As to quaternary structure, forms heterodimers with envelope protein E in the endoplasmic reticulum and Golgi. Homodimer; in the endoplasmic reticulum and Golgi. Interacts with protein prM. Interacts with non-structural protein 1. In terms of assembly, homodimer; Homohexamer when secreted. Interacts with envelope protein E. NS1 interacts with NS4B. Interacts with host complement protein CFH; this interaction leads to the degradation of C3. As to quaternary structure, interacts (via N-terminus) with serine protease NS3. Forms a heterodimer with serine protease NS3. May form homooligomers. In terms of assembly, forms a heterodimer with NS2B. Interacts with non-structural protein 2A (via N-terminus). Interacts with NS4B. Interacts with unphosphorylated RNA-directed RNA polymerase NS5; this interaction stimulates RNA-directed RNA polymerase NS5 guanylyltransferase activity. As to quaternary structure, interacts with serine protease NS3. Homodimer. Interacts with host STAT2; this interaction inhibits the phosphorylation of the latter, and, when all viral proteins are present (polyprotein), targets STAT2 for degradation. Interacts with serine protease NS3. Specific enzymatic cleavages in vivo yield mature proteins. Cleavages in the lumen of endoplasmic reticulum are performed by host signal peptidase, whereas cleavages in the cytoplasmic side are performed by serine protease NS3. Signal cleavage at the 2K-4B site requires a prior NS3 protease-mediated cleavage at the 4A-2K site. Post-translationally, cleaved in post-Golgi vesicles by a host furin, releasing the mature small envelope protein M, and peptide pr. This cleavage is incomplete as up to 30% of viral particles still carry uncleaved prM. In terms of processing, N-glycosylated. N-glycosylated. The excreted form is glycosylated and this is required for efficient secretion of the protein from infected cells. Post-translationally, acetylated by host KAT5. Acetylation modulates NS3 RNA-binding and unwinding activities and plays an important positive role for viral replication. In terms of processing, phosphorylated on serines residues. This phosphorylation may trigger NS5 nuclear localization.

The protein resides in the virion. The protein localises to the host nucleus. Its subcellular location is the host cytoplasm. It localises to the host perinuclear region. It is found in the secreted. The protein resides in the virion membrane. The protein localises to the host endoplasmic reticulum membrane. It catalyses the reaction Selective hydrolysis of -Xaa-Xaa-|-Yaa- bonds in which each of the Xaa can be either Arg or Lys and Yaa can be either Ser or Ala.. The enzyme catalyses RNA(n) + a ribonucleoside 5'-triphosphate = RNA(n+1) + diphosphate. It carries out the reaction a ribonucleoside 5'-triphosphate + H2O = a ribonucleoside 5'-diphosphate + phosphate + H(+). The catalysed reaction is ATP + H2O = ADP + phosphate + H(+). It catalyses the reaction a 5'-end (5'-triphosphoguanosine)-ribonucleoside in mRNA + S-adenosyl-L-methionine = a 5'-end (N(7)-methyl 5'-triphosphoguanosine)-ribonucleoside in mRNA + S-adenosyl-L-homocysteine. The enzyme catalyses a 5'-end (N(7)-methyl 5'-triphosphoguanosine)-ribonucleoside in mRNA + S-adenosyl-L-methionine = a 5'-end (N(7)-methyl 5'-triphosphoguanosine)-(2'-O-methyl-ribonucleoside) in mRNA + S-adenosyl-L-homocysteine + H(+). Plays a role in virus budding by binding to the cell membrane and gathering the viral RNA into a nucleocapsid that forms the core of a mature virus particle. During virus entry, may induce genome penetration into the host cytoplasm after hemifusion induced by the surface proteins. Can migrate to the cell nucleus where it modulates host functions. Its function is as follows. Inhibits RNA silencing by interfering with host Dicer. Functionally, prevents premature fusion activity of envelope proteins in trans-Golgi by binding to envelope protein E at pH6.0. After virion release in extracellular space, gets dissociated from E dimers. In terms of biological role, acts as a chaperone for envelope protein E during intracellular virion assembly by masking and inactivating envelope protein E fusion peptide. prM is the only viral peptide matured by host furin in the trans-Golgi network probably to avoid catastrophic activation of the viral fusion activity in acidic Golgi compartment prior to virion release. prM-E cleavage is inefficient, and many virions are only partially matured. These uncleaved prM would play a role in immune evasion. May play a role in virus budding. Exerts cytotoxic effects by activating a mitochondrial apoptotic pathway through M ectodomain. May display a viroporin activity. Its function is as follows. Binds to host cell surface receptor and mediates fusion between viral and cellular membranes. Envelope protein is synthesized in the endoplasmic reticulum in the form of heterodimer with protein prM. They play a role in virion budding in the ER, and the newly formed immature particle is covered with 60 spikes composed of heterodimer between precursor prM and envelope protein E. The virion is transported to the Golgi apparatus where the low pH causes dissociation of PrM-E heterodimers and formation of E homodimers. prM-E cleavage is inefficient, and many virions are only partially matured. These uncleaved prM would play a role in immune evasion. Functionally, involved in immune evasion, pathogenesis and viral replication. Once cleaved off the polyprotein, is targeted to three destinations: the viral replication cycle, the plasma membrane and the extracellular compartment. Essential for viral replication. Required for formation of the replication complex and recruitment of other non-structural proteins to the ER-derived membrane structures. Excreted as a hexameric lipoparticle that plays a role against host immune response. Antagonizing the complement function. Binds to the host macrophages and dendritic cells. Inhibits signal transduction originating from Toll-like receptor 3 (TLR3). In terms of biological role, component of the viral RNA replication complex that functions in virion assembly and antagonizes the host immune response. Required cofactor for the serine protease function of NS3. May have membrane-destabilizing activity and form viroporins. Its function is as follows. Displays three enzymatic activities: serine protease, NTPase and RNA helicase. NS3 serine protease, in association with NS2B, performs its autocleavage and cleaves the polyprotein at dibasic sites in the cytoplasm: C-prM, NS2A-NS2B, NS2B-NS3, NS3-NS4A, NS4A-2K and NS4B-NS5. NS3 RNA helicase binds RNA and unwinds dsRNA in the 3' to 5' direction. Functionally, regulates the ATPase activity of the NS3 helicase activity. NS4A allows NS3 helicase to conserve energy during unwinding. In terms of biological role, functions as a signal peptide for NS4B and is required for the interferon antagonism activity of the latter. Induces the formation of ER-derived membrane vesicles where the viral replication takes place. Inhibits interferon (IFN)-induced host STAT1 phosphorylation and nuclear translocation, thereby preventing the establishment of cellular antiviral state by blocking the IFN-alpha/beta pathway. Inhibits STAT2 translocation in the nucleus after IFN-alpha treatment. Its function is as follows. Replicates the viral (+) and (-) RNA genome, and performs the capping of genomes in the cytoplasm. NS5 methylates viral RNA cap at guanine N-7 and ribose 2'-O positions. Besides its role in RNA genome replication, also prevents the establishment of cellular antiviral state by blocking the interferon-alpha/beta (IFN-alpha/beta) signaling pathway. Inhibits host TYK2 and STAT2 phosphorylation, thereby preventing activation of JAK-STAT signaling pathway. This Homo sapiens (Human) protein is Genome polyprotein.